Consider the following 427-residue polypeptide: UPF0229 protein YeaH (427 aa).

Positions 84–110 (QSDRIERPQGGGGGSGSGQGQASQDGE) are disordered. A compositionally biased stretch (gly residues) spans 92 to 102 (QGGGGGSGSGQ).

This sequence belongs to the UPF0229 family.

In Escherichia fergusonii (strain ATCC 35469 / DSM 13698 / CCUG 18766 / IAM 14443 / JCM 21226 / LMG 7866 / NBRC 102419 / NCTC 12128 / CDC 0568-73), this protein is UPF0229 protein YeaH.